The sequence spans 576 residues: Arginine--tRNA ligase (576 aa).

Positions 128 to 136 (PTGPMHIGH) match the 'HIGH' region motif.

This sequence belongs to the class-I aminoacyl-tRNA synthetase family. Monomer.

Its subcellular location is the cytoplasm. It carries out the reaction tRNA(Arg) + L-arginine + ATP = L-arginyl-tRNA(Arg) + AMP + diphosphate. In Rickettsia conorii (strain ATCC VR-613 / Malish 7), this protein is Arginine--tRNA ligase.